The primary structure comprises 270 residues: 2-dehydro-3-deoxyphosphooctonate aldolase (270 aa).

The protein belongs to the KdsA family.

It localises to the cytoplasm. The catalysed reaction is D-arabinose 5-phosphate + phosphoenolpyruvate + H2O = 3-deoxy-alpha-D-manno-2-octulosonate-8-phosphate + phosphate. It functions in the pathway carbohydrate biosynthesis; 3-deoxy-D-manno-octulosonate biosynthesis; 3-deoxy-D-manno-octulosonate from D-ribulose 5-phosphate: step 2/3. It participates in bacterial outer membrane biogenesis; lipopolysaccharide biosynthesis. The protein is 2-dehydro-3-deoxyphosphooctonate aldolase of Helicobacter hepaticus (strain ATCC 51449 / 3B1).